The primary structure comprises 342 residues: Flavanone 3-dioxygenase 2 (342 aa).

Residues 193 to 293 form the Fe2OG dioxygenase domain; sequence QEQHMAVNYY…RMSVASFLCP (101 aa). Fe cation contacts are provided by His217, Asp219, and His274. 2-oxoglutarate is bound at residue Arg284.

The protein belongs to the iron/ascorbate-dependent oxidoreductase family. Requires Fe(2+) as cofactor. The cofactor is L-ascorbate. As to expression, expressed in roots, leaves and stems. Expressed at low levels in seeds.

It carries out the reaction a (2S)-flavan-4-one + 2-oxoglutarate + O2 = a (2R,3R)-dihydroflavonol + succinate + CO2. It participates in secondary metabolite biosynthesis; flavonoid biosynthesis. Catalyzes the 3-beta-hydroxylation of 2S-flavanones to 2R,3R-dihydroflavonols which are intermediates in the biosynthesis of flavonols, anthocyanidins, catechins and proanthocyanidins in plants. Converts (2S)-eriodictyol to (+)-taxifolin and (2S)-naringenin to (+)-(2R/3R)-dihydrokaempferol in vitro. This chain is Flavanone 3-dioxygenase 2, found in Oryza sativa subsp. japonica (Rice).